Consider the following 230-residue polypeptide: MSERAPVVTIDGPSGAGKGTISQLLAERLGWKLLDSGAIYRVLALAAIHHNVELDNEDSLSLLAAHLDVQFITGNGLHGIKVVLEGEDVSIDIRSQECSNAASKVAAYPRVREALLRRQRAFNEAPGLIADGRDMGTVVFPNTPAKIYLTASAEERAQRRYNQLQDKGFDVNIDRLLSEIIERDDRDTNRSVAPLVPAEDALIIDTSGIGIDEVLDIALTHIQTKLPSVS.

ATP is bound at residue 12 to 20; the sequence is GPSGAGKGT.

The protein belongs to the cytidylate kinase family. Type 1 subfamily.

It is found in the cytoplasm. The enzyme catalyses CMP + ATP = CDP + ADP. The catalysed reaction is dCMP + ATP = dCDP + ADP. In Shewanella sediminis (strain HAW-EB3), this protein is Cytidylate kinase.